An 852-amino-acid polypeptide reads, in one-letter code: Bifunctional uridylyltransferase/uridylyl-removing enzyme (852 aa).

Residues 1-318 (MPANLSSALE…SAPMRVTLRI (318 aa)) are uridylyltransferase. The uridylyl-removing stretch occupies residues 319-672 (DDDYIQVNNQ…SRILFKSDSF (354 aa)). Positions 436–558 (VDDHILTVVR…VQTHERLSAL (123 aa)) constitute an HD domain. ACT domains follow at residues 673 to 757 (QVMV…SHSR) and 785 to 852 (SVEI…EQLS).

This sequence belongs to the GlnD family. Requires Mg(2+) as cofactor.

It catalyses the reaction [protein-PII]-L-tyrosine + UTP = [protein-PII]-uridylyl-L-tyrosine + diphosphate. The catalysed reaction is [protein-PII]-uridylyl-L-tyrosine + H2O = [protein-PII]-L-tyrosine + UMP + H(+). Uridylyltransferase (UTase) activity is inhibited by glutamine, while glutamine activates uridylyl-removing (UR) activity. Its function is as follows. Modifies, by uridylylation and deuridylylation, the PII regulatory proteins (GlnB and homologs), in response to the nitrogen status of the cell that GlnD senses through the glutamine level. Under low glutamine levels, catalyzes the conversion of the PII proteins and UTP to PII-UMP and PPi, while under higher glutamine levels, GlnD hydrolyzes PII-UMP to PII and UMP (deuridylylation). Thus, controls uridylylation state and activity of the PII proteins, and plays an important role in the regulation of nitrogen assimilation and metabolism. The polypeptide is Bifunctional uridylyltransferase/uridylyl-removing enzyme (Neisseria meningitidis serogroup A / serotype 4A (strain DSM 15465 / Z2491)).